The sequence spans 516 residues: Cysteine--tRNA ligase (516 aa).

Cys-34 contributes to the Zn(2+) binding site. Positions 36 to 46 match the 'HIGH' region motif; that stretch reads PTVYNFAHLGN. Zn(2+) contacts are provided by Cys-225, His-250, and Glu-254. A 'KMSKS' region motif is present at residues 285 to 289; that stretch reads KMSKS. An ATP-binding site is contributed by Lys-288.

Belongs to the class-I aminoacyl-tRNA synthetase family. In terms of assembly, monomer. Requires Zn(2+) as cofactor.

It localises to the cytoplasm. The catalysed reaction is tRNA(Cys) + L-cysteine + ATP = L-cysteinyl-tRNA(Cys) + AMP + diphosphate. The sequence is that of Cysteine--tRNA ligase from Zymomonas mobilis subsp. mobilis (strain ATCC 31821 / ZM4 / CP4).